Consider the following 106-residue polypeptide: Toxin-like structure LSTX-D9 (106 aa).

The signal sequence occupies residues 1–20; that stretch reads MMKVLVVVALLLTLIIYSSS. Positions 21–41 are excised as a propeptide; the sequence is DGIDDLEADELVSLMAHEQTR. 4 disulfide bridges follow: Cys-45–Cys-60, Cys-52–Cys-69, Cys-59–Cys-85, and Cys-71–Cys-83.

It belongs to the neurotoxin 19 (CSTX) family. 02 (D7) subfamily. In terms of tissue distribution, expressed by the venom gland.

The protein resides in the secreted. The polypeptide is Toxin-like structure LSTX-D9 (Lycosa singoriensis (Wolf spider)).